The following is a 363-amino-acid chain: rRNA processing protein rcl1 (363 aa).

It belongs to the RNA 3'-terminal cyclase family. Type 2 subfamily. In terms of assembly, interacts directly with bms1 and the U3 snoRNA to form a stable subcomplex. Component of the 90S small subunit processome also known as 90S pre-ribosome that consists of the 35S pre-rRNA, early-associating ribosomal proteins most of which are part of the small ribosomal subunit, the U3 snoRNA and associated proteins.

Its subcellular location is the nucleus. The protein resides in the nucleolus. Functionally, does not have cyclase activity. Plays a role in 40S-ribosomal-subunit biogenesis in the early pre-rRNA processing steps at sites A0, A1 and A2 that are required for proper maturation of the 18S RNA. Rcl1 activates bms1 by promoting GDP/GTP exchange. The protein is rRNA processing protein rcl1 (rcl1) of Schizosaccharomyces pombe (strain 972 / ATCC 24843) (Fission yeast).